The primary structure comprises 119 residues: Ghilanten (119 aa).

Q1 is subject to Pyrrolidone carboxylic acid. Cystine bridges form between C8-C19, C13-C26, C28-C48, C33-C51, C37-C53, C62-C73, C67-C80, C82-C103, C88-C106, and C92-C108. Residues 28–53 form the Antistasin-like 1 domain; sequence CPEVRCRVYCSHGFQRSRYGCEVCRC. The 26-residue stretch at 83-108 folds into the Antistasin-like 2 domain; that stretch reads KIDINCRKTCPNGLKRDKLGCEYCEC. Residues 97-100 and 111-118 each bind heparin; these read KRDK and KRKLVPRL.

This sequence belongs to the protease inhibitor I15 (antistasin) family.

The protein localises to the secreted. In terms of biological role, this highly disulfide-bonded protein is a potent inhibitor of factor Xa. May have therapeutic utility as an anticoagulant. Also exhibits a strong metastatic activity. In Haementeria ghilianii (Amazon leech), this protein is Ghilanten.